Here is a 935-residue protein sequence, read N- to C-terminus: Intimin (935 aa).

The N-terminal stretch at 1-41 is a signal peptide; sequence MITHGFYARTRHKHKLKKTFIMLSAGLGLFFYVNQNSFANG. The peptidoglycan-binding stretch occupies residues 40–153; the sequence is NGENYFKLSS…KMTKMSPDAT (114 aa). The interval 40–153 is sufficient for homodimerization; that stretch reads NGENYFKLSS…KMTKMSPDAT (114 aa). Residues 40–212 are required for periplasmic localization; it reads NGENYFKLSS…LQAWLQHYGT (173 aa). The LysM domain occupies 63–112; that stretch reads LFYTLKTGETVSSISKSQGISLSVIWSLNKHLYSSESEMLKAAPGQQIIL. The inverse autotransporter stretch occupies residues 210–411; it reads YGTAEVNLQS…LYSMQFRYQF (202 aa). A signature sequence for beta-barrel assembly machinery (BAM), which recognizes the unfolded beta-barrel in the periplasm region spans residues 402–411; that stretch reads LYSMQFRYQF. 2 Big-1 domains span residues 560–653 and 660–754; these read VTDF…VIFV and ITEI…VTFF. Residues 790-834 form the BIG2 domain; the sequence is GGNGTYSWHSENTNIATVDESGKVTLKGKGTAVINVTSGDKQTVS. An intrachain disulfide couples Cys859 to Cys933.

It belongs to the intimin/invasin family. In terms of assembly, homodimer. Interacts with Tir.

It localises to the cell outer membrane. Its function is as follows. An inverse autotransporter. Adhesin, which mediates attachment to the human intestine epithelial cells. Necessary for the production of attaching and effacing lesions on infected human tissue culture cells. Anchored to the outer membrane by binding to peptidoglycan (PGN) via its periplasmic domain, thus helping in receptor interactions during host invasion. PGN-binding may also aid in resisting mechanical and chemical stress during transit of the bacterium through the gastrointestinal tract of the host. This Escherichia coli O111:H- protein is Intimin (eae).